The following is a 578-amino-acid chain: Potassium-transporting ATPase potassium-binding subunit (578 aa).

10 consecutive transmembrane segments (helical) span residues 3–23, 65–85, 134–154, 175–195, 261–281, 293–313, 397–417, 435–455, 503–523, and 543–563; these read NAIL…IPLG, SFSV…LNLL, GLTV…FALI, IVLY…VSQG, FSNL…CFTF, AIFI…GVSE, GLYG…LMVG, AMLI…LASI, IGLI…AIAG, and LLFI…SFFP.

The protein belongs to the KdpA family. As to quaternary structure, the system is composed of three essential subunits: KdpA, KdpB and KdpC.

The protein resides in the cell membrane. Functionally, part of the high-affinity ATP-driven potassium transport (or Kdp) system, which catalyzes the hydrolysis of ATP coupled with the electrogenic transport of potassium into the cytoplasm. This subunit binds the extracellular potassium ions and delivers the ions to the membrane domain of KdpB through an intramembrane tunnel. In Clostridium perfringens (strain ATCC 13124 / DSM 756 / JCM 1290 / NCIMB 6125 / NCTC 8237 / Type A), this protein is Potassium-transporting ATPase potassium-binding subunit.